Consider the following 112-residue polypeptide: Elongin-C (112 aa).

The protein belongs to the SKP1 family. Heterotrimer of an A (ELOA, ELOA2 or ELOA3P), ELOB and ELOC subunit. The elongin BC complex interacts with EPOP; leading to recruit the elongin BC complex to Polycomb group (PcG) target genes, thereby restricting excessive activity of the PRC2/EED-EZH2 complex. Component of multiple cullin-RING E3 ubiquitin-protein ligase complexes composed of Elongin BC (ELOB and ELOC), a cullin (CUL2 or CUL5), a catalytic subunit (RBX1 or RNF7/RBX2), as well as a substrate adapter protein that can be either ASB2, ASB9, ASB11, KLHDC2, KLHDC3, KLHDC10, APPBP2, FEM1A, FEM1B, FEM1C, LRR1, PCMTD1, SOCS1, SOCS2, SOCS5, SPSB1, SPSB3, ELOA, VHL, WSB1, ZYG11B or RAB40C. Interacts with TMF1. As part of the Elongin BC E3 ubiquitin ligase complex; interacts with NRBP1. May form oligomers as a KLHDC2/KLHDC3-ELOB-ELOC complex; this interaction is autoinhibitory for the E3 ligase complex as the substrate-binding site of KLHDC2/KLHDC3 is blocked in the oligomer. Post-translationally, ubiquitinated by the DCX(AMBRA1) complex, leading to its degradation by the proteasome.

The protein resides in the nucleus. It functions in the pathway protein modification; protein ubiquitination. Functionally, SIII, also known as elongin, is a general transcription elongation factor that increases the RNA polymerase II transcription elongation past template-encoded arresting sites. Subunit A is transcriptionally active and its transcription activity is strongly enhanced by binding to the dimeric complex of the SIII regulatory subunits B and C (elongin BC complex). In embryonic stem cells, the elongin BC complex is recruited by EPOP to Polycomb group (PcG) target genes in order generate genomic region that display both active and repressive chromatin properties, an important feature of pluripotent stem cells. Core component of multiple cullin-RING-based ECS (ElonginB/C-CUL2/5-SOCS-box protein) E3 ubiquitin-protein ligase complexes, which mediate the ubiquitination of target proteins. By binding to BC-box motifs it seems to link target recruitment subunits, like VHL and members of the SOCS box family, to Cullin/RBX1 modules that activate E2 ubiquitination enzymes. Component the von Hippel-Lindau ubiquitination complex CBC(VHL). A number of ECS complexes (containing either KLHDC2, KLHDC3, KLHDC10, APPBP2, FEM1A, FEM1B or FEM1C as substrate-recognition component) are part of the DesCEND (destruction via C-end degrons) pathway, which recognizes a C-degron located at the extreme C terminus of target proteins, leading to their ubiquitination and degradation. The ECS(ASB9) complex mediates ubiquitination and degradation of CKB. As part of a multisubunit ubiquitin ligase complex, polyubiquitinates monoubiquitinated POLR2A. ECS(LRR1) ubiquitinates MCM7 and promotes CMG replisome disassembly by VCP and chromatin extraction during S-phase. As part of the ECS(RAB40C) complex, mediates ANKRD28 ubiquitination and degradation, thereby inhibiting protein phosphatase 6 (PP6) complex activity and focal adhesion assembly during cell migration. The sequence is that of Elongin-C (ELOC) from Bos taurus (Bovine).